A 1785-amino-acid polypeptide reads, in one-letter code: 1,3-beta-glucan synthase component FKS3 (1785 aa).

A run of 8 helical transmembrane segments spans residues 337–357 (FWIIHFAPFWFFTTFNSPTLY), 375–395 (LSVIAFGGTIACLVQILATVF), 415–435 (IGLLFCLAINLGPSVYVLGFF), 444–464 (AYIVSIVQLIIAFLTTFFFAV), 508–528 (LWVFVYLAKYIESYFFLTLSL), 547–567 (YLLGPILCKWQAKITLVLMLL), 572–592 (LFFLDTYLWYIICNCIFSIVL), and 712–732 (LATPISEPVPVDCMPTFTVLV). Basic and acidic residues-rich tracts occupy residues 791-801 (ESSHDEDRLEI) and 815-824 (DHTESRKLPT). A disordered region spans residues 791-824 (ESSHDEDRLEIPDALYDPRSSPLSDHTESRKLPT). N844, N874, N955, N1002, and N1170 each carry an N-linked (GlcNAc...) asparagine glycan. 3 consecutive transmembrane segments (helical) span residues 1215–1235 (LFISFSVQLFFVLLLNLGALN), 1268–1288 (VSIFVLSIFIVFFIAFAPLLI), and 1303–1323 (FLHHLLSMAPLFEVFVCQVYS). The N-linked (GlcNAc...) asparagine glycan is linked to N1360. Helical transmembrane passes span 1370-1390 (FFMLLFAIISMWQPALLWFWI), 1394-1414 (SMCFAPFIFNPHQFAFMDFFI), 1475-1495 (FAELFLPFCVFLFNFTAFSFI), 1514-1534 (LLVTFLPIFLNSIVLFLLFWV), and 1549-1569 (AGAVIAFIAHTFSVLVYLLDF). An N-linked (GlcNAc...) asparagine glycan is attached at N1579. 3 consecutive transmembrane segments (helical) span residues 1585 to 1605 (ILLITCINMHLILFKVFTTIF), 1655 to 1675 (FFLGHFLLFIQTPIILLPFID), and 1713 to 1733 (FSLYFVMLGVLLFMLIAPFFA). A glycan (N-linked (GlcNAc...) asparagine) is linked at N1761.

This sequence belongs to the glycosyltransferase 48 family. N-glycosylated.

Its subcellular location is the mitochondrion. It is found in the membrane. It carries out the reaction [(1-&gt;3)-beta-D-glucosyl](n) + UDP-alpha-D-glucose = [(1-&gt;3)-beta-D-glucosyl](n+1) + UDP + H(+). In terms of biological role, required for spore wall assembly. The polypeptide is 1,3-beta-glucan synthase component FKS3 (FKS3) (Saccharomyces cerevisiae (strain ATCC 204508 / S288c) (Baker's yeast)).